A 161-amino-acid polypeptide reads, in one-letter code: Small ribosomal subunit protein uS9 (161 aa).

This sequence belongs to the universal ribosomal protein uS9 family.

The polypeptide is Small ribosomal subunit protein uS9 (Bartonella bacilliformis (strain ATCC 35685 / KC583 / Herrer 020/F12,63)).